A 355-amino-acid chain; its full sequence is Syntaxin-5 (355 aa).

Topologically, residues Met1 to Arg333 are cytoplasmic. The span at Pro28–Asp37 shows a compositional bias: polar residues. The tract at residues Pro28–Leu47 is disordered. The short motif at Ile245–Met247 is the IxM motif; signal for cargo packaging into COPII-coated vesicles element. The region spanning Asp263–Tyr325 is the t-SNARE coiled-coil homology domain. A coiled-coil region spans residues Phe287–Ala318. A helical; Anchor for type IV membrane protein membrane pass occupies residues Trp334 to Leu354. A topological domain (vesicular) is located at residue Ala355.

Belongs to the syntaxin family. In terms of assembly, part of a ternary complex containing STX5A, NSFL1C and VCP. Part of a unique SNARE complex composed of the Golgi SNAREs GOSR1, GOSR2 and YKT6. This complex also includes VTI1A. Component of a SNARE complex consisting of STX5, YKT6, GOSR1 and BET1L. Interacts with BET1L. Interacts with BET1. Interacts with COG4. Interacts with GM130/GOLGA2. Interacts (via IxM motif) with SEC24C and SEC24D; mediates STX5 packaging into COPII-coated vesicles. Interacts with VLDLR; this interaction mediates VLDLR translocation from the endoplasmic reticulum to the plasma membrane.

It localises to the endoplasmic reticulum-Golgi intermediate compartment membrane. Its subcellular location is the golgi apparatus membrane. In terms of biological role, mediates endoplasmic reticulum to Golgi transport. Together with p115/USO1 and GM130/GOLGA2, involved in vesicle tethering and fusion at the cis-Golgi membrane to maintain the stacked and inter-connected structure of the Golgi apparatus. This chain is Syntaxin-5 (STX5), found in Bos taurus (Bovine).